The primary structure comprises 184 residues: U3 small nucleolar ribonucleoprotein protein IMP3 (184 aa).

Residues 109 to 175 (RRLPTVLLKL…IKRHVLEYNE (67 aa)) form the S4 RNA-binding domain.

This sequence belongs to the universal ribosomal protein uS4 family. Part of the small subunit (SSU) processome, composed of more than 70 proteins and the RNA chaperone small nucleolar RNA (snoRNA) U3. Component of a heterotrimeric complex containing IMP3, IMP4 and MPHOSPH10. Interacts with MPHOSPH10.

It localises to the nucleus. Its subcellular location is the nucleolus. In terms of biological role, component of the 60-80S U3 small nucleolar ribonucleoprotein (U3 snoRNP). Required for the early cleavages during pre-18S ribosomal RNA processing. Part of the small subunit (SSU) processome, first precursor of the small eukaryotic ribosomal subunit. During the assembly of the SSU processome in the nucleolus, many ribosome biogenesis factors, an RNA chaperone and ribosomal proteins associate with the nascent pre-rRNA and work in concert to generate RNA folding, modifications, rearrangements and cleavage as well as targeted degradation of pre-ribosomal RNA by the RNA exosome. The protein is U3 small nucleolar ribonucleoprotein protein IMP3 of Homo sapiens (Human).